The primary structure comprises 100 residues: Large ribosomal subunit protein uL23 (100 aa).

This sequence belongs to the universal ribosomal protein uL23 family. In terms of assembly, part of the 50S ribosomal subunit. Contacts protein L29, and trigger factor when it is bound to the ribosome.

In terms of biological role, one of the early assembly proteins it binds 23S rRNA. One of the proteins that surrounds the polypeptide exit tunnel on the outside of the ribosome. Forms the main docking site for trigger factor binding to the ribosome. In Synechococcus sp. (strain RCC307), this protein is Large ribosomal subunit protein uL23.